The sequence spans 288 residues: Pyridoxal kinase PdxY (288 aa).

Substrate is bound by residues S12 and 47–48 (TQ). Residues D114, E151, K184, and 211 to 214 (RPLL) each bind ATP. D225 serves as a coordination point for substrate.

This sequence belongs to the pyridoxine kinase family. PdxY subfamily. Homodimer. Mg(2+) serves as cofactor.

The catalysed reaction is pyridoxal + ATP = pyridoxal 5'-phosphate + ADP + H(+). It functions in the pathway cofactor metabolism; pyridoxal 5'-phosphate salvage; pyridoxal 5'-phosphate from pyridoxal: step 1/1. In terms of biological role, pyridoxal kinase involved in the salvage pathway of pyridoxal 5'-phosphate (PLP). Catalyzes the phosphorylation of pyridoxal to PLP. The chain is Pyridoxal kinase PdxY from Pseudomonas aeruginosa (strain UCBPP-PA14).